Consider the following 413-residue polypeptide: Protein arginine N-methyltransferase 2 (413 aa).

2 disordered regions span residues 65-85 (DDEE…QKSV) and 148-178 (ELED…SAPQ). A compositionally biased stretch (acidic residues) spans 148–173 (ELEDDDEEEEEGQEEQTGTEEVEVEG). An RMT2 domain is found at 192-413 (TGPDVTNSRY…YRLPLCKYMD (222 aa)). S-adenosyl-L-methionine is bound by residues Tyr-201, Met-230, 250–255 (HGMGIV), 271–273 (EAH), 298–299 (WQ), and Asp-318.

Belongs to the class I-like SAM-binding methyltransferase superfamily. RMT2 methyltransferase family. As to quaternary structure, monomer.

The protein resides in the cytoplasm. It is found in the nucleus. Functionally, S-adenosyl-L-methionine-dependent protein-arginine N-methyltransferase that methylates the delta-nitrogen atom of arginine residues to form N5-methylarginine (type IV) in target proteins. Monomethylates ribosomal protein L12. This Aspergillus oryzae (strain ATCC 42149 / RIB 40) (Yellow koji mold) protein is Protein arginine N-methyltransferase 2.